Here is a 356-residue protein sequence, read N- to C-terminus: Dihydroorotate dehydrogenase (quinone) (356 aa).

FMN contacts are provided by residues 60-64 (AGFDK) and serine 84. A substrate-binding site is contributed by lysine 64. 109 to 113 (NRFGF) contributes to the substrate binding site. Residues asparagine 140 and asparagine 171 each contribute to the FMN site. Asparagine 171 serves as a coordination point for substrate. Serine 174 serves as the catalytic Nucleophile. Substrate is bound at residue asparagine 176. Lysine 216 and glycine 244 together coordinate FMN. 245–246 (NT) is a binding site for substrate. FMN contacts are provided by residues glycine 267, glycine 296, and 317-318 (YS).

The protein belongs to the dihydroorotate dehydrogenase family. Type 2 subfamily. Monomer. The cofactor is FMN.

The protein localises to the cell membrane. The catalysed reaction is (S)-dihydroorotate + a quinone = orotate + a quinol. The protein operates within pyrimidine metabolism; UMP biosynthesis via de novo pathway; orotate from (S)-dihydroorotate (quinone route): step 1/1. Catalyzes the conversion of dihydroorotate to orotate with quinone as electron acceptor. This Azorhizobium caulinodans (strain ATCC 43989 / DSM 5975 / JCM 20966 / LMG 6465 / NBRC 14845 / NCIMB 13405 / ORS 571) protein is Dihydroorotate dehydrogenase (quinone).